Here is a 91-residue protein sequence, read N- to C-terminus: Small ribosomal subunit protein bS16 (91 aa).

This sequence belongs to the bacterial ribosomal protein bS16 family.

This chain is Small ribosomal subunit protein bS16, found in Exiguobacterium sibiricum (strain DSM 17290 / CCUG 55495 / CIP 109462 / JCM 13490 / 255-15).